Reading from the N-terminus, the 28-residue chain is Short cationic peptide-1b (28 aa).

E28 is subject to Glutamic acid 1-amide.

In terms of tissue distribution, expressed by the venom gland.

The protein resides in the secreted. In Cupiennius salei (American wandering spider), this protein is Short cationic peptide-1b.